The sequence spans 110 residues: Minor capsid protein VP2 (110 aa).

The protein belongs to the vesivirus VP2 protein family. As to quaternary structure, homooligomer. The portal-like structure consists in 12 copies of VP2. Interacts with capsid protein VP1.

It is found in the virion. Its subcellular location is the host cytoplasm. Its function is as follows. Minor structural protein that forms a portal-like structure at a unique three-fold axis of symmetry, following binding to the host receptor. The channel formed by VP2 may allow the delivery of the viral genome through the host endosomal membrane. This chain is Minor capsid protein VP2, found in Otariidae (fur seals &amp; sea lions).